We begin with the raw amino-acid sequence, 95 residues long: MTKSELIEKLATRQSQLSAKEVEGAIKEMLEQMATTLESGDRIEIRGFGSFSLHYRAPRTGRNPKTGSSVDLEGKYVPHFKPGKELRERVDAVNV.

A disordered region spans residues 56-76 (RAPRTGRNPKTGSSVDLEGKY).

Belongs to the bacterial histone-like protein family. Heterodimer of an alpha and a beta chain.

Functionally, this protein is one of the two subunits of integration host factor, a specific DNA-binding protein that functions in genetic recombination as well as in transcriptional and translational control. This Shewanella baltica (strain OS223) protein is Integration host factor subunit beta.